The chain runs to 395 residues: MNYQKELLIEAIQEDNLKEVQKLLQAGVNPNTLDEYGKLCIRSAINNENLDIVKVLLDYGADPNAIDKIKDPIILEAIRSRELGIINSLLKKGANPNVLDRHENPIILSALPRGVNIVNTLLNNGADPNQVDKNGNTALSIILERTGDINVDVTALLIEKVKEKALNLRNSNGETCLHLAAQQGKIQMFDKYLDYYQTVNITDKAGNTPLYWSKLLGHTEISDMLNKRAEELNETAYTKITKTERFEDLPPRPKIALSYNLEIGGRYANEEKTKLIYQGGDVEYIDFRAIVPESANTEKKINEEVINEAKQKAKELLAGKDALVIPGNNREVDKEVAKHFGGEVNIKTGQPDFARSLAEMVMAEVAIEKGMPIMGICGGHQIINTYLKVPILKEK.

7 ANK repeats span residues 3–32 (YQKE…NPNT), 36–65 (YGKL…DPNA), 69–98 (IKDP…NPNV), 101–130 (RHEN…DPNQ), 134–166 (NGNT…EKAL), 172–201 (NGET…TVNI), and 205–234 (AGNT…ELNE). Positions 272–395 (KTKLIYQGGD…YLKVPILKEK (124 aa)) constitute a Glutamine amidotransferase type-1 domain. The Nucleophile role is filled by Cys-377.

This Rickettsia felis (strain ATCC VR-1525 / URRWXCal2) (Rickettsia azadi) protein is Putative ankyrin repeat protein RF_0950.